A 989-amino-acid chain; its full sequence is Phosphoenolpyruvate carboxylase (989 aa).

Active-site residues include histidine 175 and lysine 630.

Belongs to the PEPCase type 1 family. Mg(2+) serves as cofactor.

The enzyme catalyses oxaloacetate + phosphate = phosphoenolpyruvate + hydrogencarbonate. Forms oxaloacetate, a four-carbon dicarboxylic acid source for the tricarboxylic acid cycle. This chain is Phosphoenolpyruvate carboxylase, found in Prochlorococcus marinus (strain MIT 9215).